Consider the following 330-residue polypeptide: Aspartate--ammonia ligase (330 aa).

This sequence belongs to the class-II aminoacyl-tRNA synthetase family. AsnA subfamily.

The protein localises to the cytoplasm. The catalysed reaction is L-aspartate + NH4(+) + ATP = L-asparagine + AMP + diphosphate + H(+). It participates in amino-acid biosynthesis; L-asparagine biosynthesis; L-asparagine from L-aspartate (ammonia route): step 1/1. This chain is Aspartate--ammonia ligase, found in Streptococcus thermophilus (strain CNRZ 1066).